The sequence spans 160 residues: MGVFNYEVETPSVIPAARLFKSYVLDGDKLIPKVAPQAITSVENVEGNGGPGTIKNITFGEGSRYKYVKERVDEVDNTNFTYSYTVIEGDVLGDKLEKVCHELKIVAAPGGGSILKISSKFHAKGDHEINAEEMKGAKEMAEKLLRAVETYLLAHSAEYN.

The protein belongs to the BetVI family.

The chain is Major pollen allergen Cor a 1 isoforms 5, 6, 11 and 16 from Corylus avellana (European hazel).